Reading from the N-terminus, the 324-residue chain is Glyoxylate/hydroxypyruvate reductase B (324 aa).

Residues arginine 237 and glutamate 266 contribute to the active site. The active-site Proton donor is the histidine 285.

This sequence belongs to the D-isomer specific 2-hydroxyacid dehydrogenase family. GhrB subfamily. Homodimer.

The protein resides in the cytoplasm. It carries out the reaction glycolate + NADP(+) = glyoxylate + NADPH + H(+). The enzyme catalyses (R)-glycerate + NAD(+) = 3-hydroxypyruvate + NADH + H(+). The catalysed reaction is (R)-glycerate + NADP(+) = 3-hydroxypyruvate + NADPH + H(+). Catalyzes the NADPH-dependent reduction of glyoxylate and hydroxypyruvate into glycolate and glycerate, respectively. This Shigella boydii serotype 4 (strain Sb227) protein is Glyoxylate/hydroxypyruvate reductase B.